The following is a 1065-amino-acid chain: Inversin (1065 aa).

16 ANK repeats span residues 13-42, 47-76, 80-110, 113-144, 148-177, 181-213, 220-250, 254-283, 288-317, 321-350, 356-385, 389-418, 422-451, 455-484, 488-517, and 523-553; these read SLASQVHAAAVNGDKGALQRLIVGNSALKD, FGRTPLMYCVLADRLDCADALLKAGADVNK, SQRTALHLAAQKGNYRFMKLLLTRRANWMQK, EEMTPLHLTTRHRSPKCLALLLKFMAPGEVDT, NKQTALHWSAYYNNPEHVKLLIKHDSNIGI, EGKIPLHWAANHKDPSAVHTVRCILDAAPTESL, EGRTPLHFAVADGNVTVVDVLTSYESCNITS, LFRTPLHWAALLGHAQIVHLLLERNKSGTI, QGATPLHYAAQSNFAETVKVFLKHPSVKDD, EGRTSFMWAAGKGSDDVLRTMLSLKSDIDI, YGGTALHAAALSGHVSTVKLLLENNAQVDA, MKHTPLFRACEMGHKDVIQTLIKGGARVDL, DGHSLLHWAALGGNADVCQILIENKINPNV, AGRTPLQCAAYGGYINCMAVLMENNADPNI, EGRTALHWSCNNGYLDAIKLLLDFAAFPNQ, and ERYTPLDYALLGERHEVIQFMLEHGALSIAA. N75 carries the post-translational modification 3-hydroxyasparagine. The short motif at 490–498 is the D-box 1 element; it reads RTALHWSCN. The 30-residue stretch at 555 to 584 folds into the IQ 1 domain; sequence QDIAAFKIQAVYKGYKVRKAFRDRKNLLMK. A compositionally biased stretch (basic and acidic residues) spans 589–616; the sequence is RKDAAAKKREEENKRKEAEQQKGRRSPD. Disordered regions lie at residues 589–833 and 847–886; these read RKDA…TPRN and HLPQSTEELRSGARRLETSTLSEDFQVSKETDPAPGPLSG. A compositionally biased stretch (polar residues) spans 627–640; that stretch reads PSTQDVPSRQSRAP. S661 is modified (phosphoserine). Positions 677–686 are enriched in polar residues; that stretch reads SSDLQGTNSR. 6 stretches are compositionally biased toward basic and acidic residues: residues 687–697, 706–715, 723–736, 752–762, 770–786, and 853–863; these read RPNETAREHSK, RPNEGSDGSR, EKSRGETAGDERCA, GPDEKGEDSRR, HDSHWKPSRRHDTEPKA, and EELRSGARRLE. The short motif at 909 to 917 is the D-box 2 element; it reads RKELFRKKN. One can recognise an IQ 2 domain in the interval 916–945; sequence KNKAAAVIQRAWRSYQLRKHLSHLRHMKQL. The disordered stretch occupies residues 976–999; it reads TTAVSKAPKSPSKGTSGTKSTKHS. The span at 983-994 shows a compositional bias: low complexity; the sequence is PKSPSKGTSGTK.

In terms of assembly, binds calmodulin via its IQ domains. Interacts with APC2. Interacts with alpha-, beta-, and gamma-catenin. Interacts with N-cadherin (CDH2). Interacts with microtubules. Interacts with NPHP1. Interacts with DVL1, PRICKLE (PRICKLE1 or PRICKLE2) and Strabismus (VANGL1 or VANGL2). Interacts with IQCB1; the interaction likely requires additional interactors. Component of a complex containing at least ANKS6, INVS, NEK8 and NPHP3. ANKS6 may organize complex assembly by linking INVS and NPHP3 to NEK8 and INVS may target the complex to the proximal ciliary axoneme. In terms of processing, may be ubiquitinated via its interaction with APC2. Post-translationally, hydroxylated at Asn-75, most probably by HIF1AN. As to expression, widely expressed. Strongly expressed in the primary cilia of renal tubular cells.

It is found in the cytoplasm. It localises to the cytoskeleton. Its subcellular location is the spindle. The protein localises to the membrane. The protein resides in the nucleus. It is found in the cell projection. It localises to the cilium. Functionally, required for normal renal development and establishment of left-right axis. Probably acts as a molecular switch between different Wnt signaling pathways. Inhibits the canonical Wnt pathway by targeting cytoplasmic disheveled (DVL1) for degradation by the ubiquitin-proteasome. This suggests that it is required in renal development to oppose the repression of terminal differentiation of tubular epithelial cells by Wnt signaling. Involved in the organization of apical junctions in kidney cells together with NPHP1, NPHP4 and RPGRIP1L/NPHP8. Does not seem to be strictly required for ciliogenesis. This is Inversin (INVS) from Homo sapiens (Human).